A 506-amino-acid chain; its full sequence is ATP synthase subunit alpha (506 aa).

ATP is bound at residue 169–176 (GDRGTGKT).

The protein belongs to the ATPase alpha/beta chains family. In terms of assembly, F-type ATPases have 2 components, CF(1) - the catalytic core - and CF(0) - the membrane proton channel. CF(1) has five subunits: alpha(3), beta(3), gamma(1), delta(1), epsilon(1). CF(0) has three main subunits: a(1), b(2) and c(9-12). The alpha and beta chains form an alternating ring which encloses part of the gamma chain. CF(1) is attached to CF(0) by a central stalk formed by the gamma and epsilon chains, while a peripheral stalk is formed by the delta and b chains.

The protein localises to the cell membrane. The enzyme catalyses ATP + H2O + 4 H(+)(in) = ADP + phosphate + 5 H(+)(out). Functionally, produces ATP from ADP in the presence of a proton gradient across the membrane. The alpha chain is a regulatory subunit. The polypeptide is ATP synthase subunit alpha (Symbiobacterium thermophilum (strain DSM 24528 / JCM 14929 / IAM 14863 / T)).